Here is a 94-residue protein sequence, read N- to C-terminus: Co-chaperonin GroES (94 aa).

It belongs to the GroES chaperonin family. In terms of assembly, heptamer of 7 subunits arranged in a ring. Interacts with the chaperonin GroEL.

The protein resides in the cytoplasm. Its function is as follows. Together with the chaperonin GroEL, plays an essential role in assisting protein folding. The GroEL-GroES system forms a nano-cage that allows encapsulation of the non-native substrate proteins and provides a physical environment optimized to promote and accelerate protein folding. GroES binds to the apical surface of the GroEL ring, thereby capping the opening of the GroEL channel. The protein is Co-chaperonin GroES of Lactococcus lactis subsp. cremoris (strain MG1363).